The primary structure comprises 954 residues: SWI/SNF-related matrix-associated actin-dependent regulator of chromatin subfamily A-like protein 1 (954 aa).

Disordered stretches follow at residues 1–20 (MSLP…RQKA) and 27–238 (KLLA…NSQK). An N-acetylserine modification is found at serine 2. Residues 3–34 (LPLTEEQRKKIEENRQKALARRAEKLLAEQHQ) adopt a coiled-coil conformation. Residues 5–30 (LTEEQRKKIEENRQKALARRAEKLLA) are mediates interaction with RPA2. A compositionally biased stretch (basic and acidic residues) spans 7–20 (EEQRKKIEENRQKA). Positions 72–83 (KQQNLSSSSNAD) are enriched in polar residues. A phosphoserine mark is found at serine 112, serine 123, serine 129, and serine 151. Polar residues-rich tracts occupy residues 171–183 (KSSQ…SSGQ) and 197–238 (ASPS…NSQK). Position 198 is a phosphoserine (serine 198). 2 consecutive HARP domains span residues 226–303 (SGSS…QPLE) and 327–398 (SLSF…DPLP). The Helicase ATP-binding domain occupies 445–600 (NFAIAKGGRL…YTQIIAVKPT (156 aa)). 458-465 (DDMGLGKT) is an ATP binding site. The DESH box motif lies at 549–552 (DESH). A Nuclear localization signal motif is present at residues 644–661 (RRLKSDVLSQLPAKQRKI). The Helicase C-terminal domain maps to 716-869 (YILDLLESGR…ETNFSEMTES (154 aa)). Positions 904–934 (ESFDPGSASGTSGSSSQNMGDTLDESSLTAS) are disordered. Low complexity predominate over residues 909–919 (GSASGTSGSSS). Positions 920 to 934 (QNMGDTLDESSLTAS) are enriched in polar residues.

This sequence belongs to the SNF2/RAD54 helicase family. SMARCAL1 subfamily. In terms of assembly, interacts with RPA2; the interaction is direct and mediates the recruitment by the RPA complex of SMARCAL1 to sites of DNA damage. Post-translationally, DNA damage-regulated phosphorylation by kinases that may include ATM, ATR and PRKDC. As to expression, ubiquitously expressed, with high levels in testis.

It localises to the nucleus. It carries out the reaction ATP + H2O = ADP + phosphate + H(+). In terms of biological role, ATP-dependent annealing helicase that binds selectively to fork DNA relative to ssDNA or dsDNA and catalyzes the rewinding of the stably unwound DNA. Rewinds single-stranded DNA bubbles that are stably bound by replication protein A (RPA). Acts throughout the genome to reanneal stably unwound DNA, performing the opposite reaction of many enzymes, such as helicases and polymerases, that unwind DNA. May play an important role in DNA damage response by acting at stalled replication forks. This is SWI/SNF-related matrix-associated actin-dependent regulator of chromatin subfamily A-like protein 1 from Homo sapiens (Human).